A 315-amino-acid chain; its full sequence is Glutathione synthetase (315 aa).

Residues 125–310 (KLFTAWFSDL…ITGMLMDAIE (186 aa)) form the ATP-grasp domain. A glycan (N-beta-linked (GlcNAc) arginine) is linked at R256. Residues E281 and N283 each coordinate Mg(2+).

Belongs to the prokaryotic GSH synthase family. It depends on Mg(2+) as a cofactor. Mn(2+) serves as cofactor. Glycosylation at Arg-256 by NleB enhances the glutathione synthetase activity, leading to an increase in glutathione production. Glycosylation may promote C.rodentium survival in oxidative stress conditions.

It carries out the reaction gamma-L-glutamyl-L-cysteine + glycine + ATP = glutathione + ADP + phosphate + H(+). It functions in the pathway sulfur metabolism; glutathione biosynthesis; glutathione from L-cysteine and L-glutamate: step 2/2. This chain is Glutathione synthetase, found in Citrobacter rodentium.